A 457-amino-acid chain; its full sequence is Bifunctional protein GlmU (457 aa).

A pyrophosphorylase region spans residues 1 to 229 (MSNSAKSVVI…HSEMEGVNNR (229 aa)). UDP-N-acetyl-alpha-D-glucosamine-binding positions include 11 to 14 (LAAG), lysine 25, glutamine 76, 81 to 82 (GT), 103 to 105 (YGD), glycine 140, glutamate 154, asparagine 169, and asparagine 227. Position 105 (aspartate 105) interacts with Mg(2+). Asparagine 227 is a binding site for Mg(2+). Residues 230–250 (LQLAALERIYQTEQAERLLLE) are linker. Positions 251-457 (GVMLLDPARF…GWKRPVKKKQ (207 aa)) are N-acetyltransferase. Arginine 333 and lysine 351 together coordinate UDP-N-acetyl-alpha-D-glucosamine. Histidine 363 acts as the Proton acceptor in catalysis. Tyrosine 366 and asparagine 377 together coordinate UDP-N-acetyl-alpha-D-glucosamine. Acetyl-CoA-binding positions include alanine 380, 386–387 (NY), serine 405, alanine 423, and arginine 440.

In the N-terminal section; belongs to the N-acetylglucosamine-1-phosphate uridyltransferase family. It in the C-terminal section; belongs to the transferase hexapeptide repeat family. As to quaternary structure, homotrimer. Requires Mg(2+) as cofactor.

It localises to the cytoplasm. The enzyme catalyses alpha-D-glucosamine 1-phosphate + acetyl-CoA = N-acetyl-alpha-D-glucosamine 1-phosphate + CoA + H(+). The catalysed reaction is N-acetyl-alpha-D-glucosamine 1-phosphate + UTP + H(+) = UDP-N-acetyl-alpha-D-glucosamine + diphosphate. Its pathway is nucleotide-sugar biosynthesis; UDP-N-acetyl-alpha-D-glucosamine biosynthesis; N-acetyl-alpha-D-glucosamine 1-phosphate from alpha-D-glucosamine 6-phosphate (route II): step 2/2. It functions in the pathway nucleotide-sugar biosynthesis; UDP-N-acetyl-alpha-D-glucosamine biosynthesis; UDP-N-acetyl-alpha-D-glucosamine from N-acetyl-alpha-D-glucosamine 1-phosphate: step 1/1. It participates in bacterial outer membrane biogenesis; LPS lipid A biosynthesis. Its function is as follows. Catalyzes the last two sequential reactions in the de novo biosynthetic pathway for UDP-N-acetylglucosamine (UDP-GlcNAc). The C-terminal domain catalyzes the transfer of acetyl group from acetyl coenzyme A to glucosamine-1-phosphate (GlcN-1-P) to produce N-acetylglucosamine-1-phosphate (GlcNAc-1-P), which is converted into UDP-GlcNAc by the transfer of uridine 5-monophosphate (from uridine 5-triphosphate), a reaction catalyzed by the N-terminal domain. The polypeptide is Bifunctional protein GlmU (Proteus mirabilis (strain HI4320)).